Here is a 216-residue protein sequence, read N- to C-terminus: Sporozoite antigen (216 aa).

The disordered stretch occupies residues 194-216; sequence QQQQPSSYGAPPASSQQPSGFFW.

The protein is Sporozoite antigen of Eimeria tenella (Coccidian parasite).